The chain runs to 206 residues: N-(5'-phosphoribosyl)anthranilate isomerase (206 aa).

Belongs to the TrpF family.

It catalyses the reaction N-(5-phospho-beta-D-ribosyl)anthranilate = 1-(2-carboxyphenylamino)-1-deoxy-D-ribulose 5-phosphate. It participates in amino-acid biosynthesis; L-tryptophan biosynthesis; L-tryptophan from chorismate: step 3/5. The polypeptide is N-(5'-phosphoribosyl)anthranilate isomerase (Pseudomonas putida (strain ATCC 700007 / DSM 6899 / JCM 31910 / BCRC 17059 / LMG 24140 / F1)).